Consider the following 1157-residue polypeptide: ATP-dependent helicase/deoxyribonuclease subunit B (1157 aa).

The 277-residue stretch at 1-277 (MTLQIIAGKA…KILLENKRAN (277 aa)) folds into the UvrD-like helicase ATP-binding domain. Residue 8–15 (GKAGTGKT) coordinates ATP. Residues 271-590 (LENKRANSDS…VLADMENAKL (320 aa)) enclose the UvrD-like helicase C-terminal domain. Residues C794, C1115, C1118, and C1124 each contribute to the [4Fe-4S] cluster site.

This sequence belongs to the helicase family. AddB/RexB type 1 subfamily. As to quaternary structure, heterodimer of AddA and AddB. It depends on Mg(2+) as a cofactor. [4Fe-4S] cluster is required as a cofactor.

In terms of biological role, the heterodimer acts as both an ATP-dependent DNA helicase and an ATP-dependent, dual-direction single-stranded exonuclease. Recognizes the chi site generating a DNA molecule suitable for the initiation of homologous recombination. The AddB subunit has 5' -&gt; 3' nuclease activity but not helicase activity. The sequence is that of ATP-dependent helicase/deoxyribonuclease subunit B from Listeria innocua serovar 6a (strain ATCC BAA-680 / CLIP 11262).